Reading from the N-terminus, the 215-residue chain is Elongation factor Ts (215 aa).

The interval 80–83 (TDFA) is involved in Mg(2+) ion dislocation from EF-Tu.

It belongs to the EF-Ts family.

The protein resides in the cytoplasm. Associates with the EF-Tu.GDP complex and induces the exchange of GDP to GTP. It remains bound to the aminoacyl-tRNA.EF-Tu.GTP complex up to the GTP hydrolysis stage on the ribosome. The chain is Elongation factor Ts from Acetivibrio thermocellus (strain ATCC 27405 / DSM 1237 / JCM 9322 / NBRC 103400 / NCIMB 10682 / NRRL B-4536 / VPI 7372) (Clostridium thermocellum).